We begin with the raw amino-acid sequence, 322 residues long: MSIMLASCIALVSSLVLTVIFLPVLINFMHSHHEGQEIRDEGPKWHQKKSGTPTMGGTIFVIAAVISVIWVAAWQHSLNKVVWILVISLLGYGIIGFLDDGIKLYYKRNLGLRAWQKLALQIIIAVVIVLIASSDHFQFGLYIPFAGVVHSIALFTIFIIFWLVGFSNAVNLSDGLDGLATGLSIVAYGTYAYIAFKQKNFAVLAFCMSVIGGLIAFFIFNHKPAKIFMGDAGSLALGGGLATVSIMLNRPWSLLLIGIVFVCETASVILQVISFQTTGKRIFKMTPIHHHFEMLGWSEWKVDIVFWLVGLICSILYLAIWG.

A run of 10 helical transmembrane segments spans residues 9-29 (IALVSSLVLTVIFLPVLINFM), 54-74 (TMGGTIFVIAAVISVIWVAAW), 82-102 (VWILVISLLGYGIIGFLDDGI), 122-142 (IIIAVVIVLIASSDHFQFGLY), 145-165 (FAGVVHSIALFTIFIIFWLVG), 176-196 (LDGLATGLSIVAYGTYAYIAF), 200-220 (NFAVLAFCMSVIGGLIAFFIF), 227-247 (IFMGDAGSLALGGGLATVSIM), 255-275 (LLIGIVFVCETASVILQVISF), and 302-322 (VDIVFWLVGLICSILYLAIWG).

This sequence belongs to the glycosyltransferase 4 family. MraY subfamily. It depends on Mg(2+) as a cofactor.

Its subcellular location is the cell membrane. It carries out the reaction UDP-N-acetyl-alpha-D-muramoyl-L-alanyl-gamma-D-glutamyl-L-lysyl-D-alanyl-D-alanine + di-trans,octa-cis-undecaprenyl phosphate = Mur2Ac(oyl-L-Ala-gamma-D-Glu-L-Lys-D-Ala-D-Ala)-di-trans,octa-cis-undecaprenyl diphosphate + UMP. It functions in the pathway cell wall biogenesis; peptidoglycan biosynthesis. Its function is as follows. Catalyzes the initial step of the lipid cycle reactions in the biosynthesis of the cell wall peptidoglycan: transfers peptidoglycan precursor phospho-MurNAc-pentapeptide from UDP-MurNAc-pentapeptide onto the lipid carrier undecaprenyl phosphate, yielding undecaprenyl-pyrophosphoryl-MurNAc-pentapeptide, known as lipid I. The sequence is that of Phospho-N-acetylmuramoyl-pentapeptide-transferase from Lactobacillus acidophilus (strain ATCC 700396 / NCK56 / N2 / NCFM).